The primary structure comprises 155 residues: 17.6 kDa class I heat shock protein 1 (155 aa).

Residues 39–154 (SSSAIANARV…KAQVKSIDIS (116 aa)) enclose the sHSP domain.

Belongs to the small heat shock protein (HSP20) family. As to quaternary structure, forms oligomeric structures. Binds to AKR2A.

The protein localises to the cytoplasm. Possesses chaperone activity. The polypeptide is 17.6 kDa class I heat shock protein 1 (HSP17.6A) (Arabidopsis thaliana (Mouse-ear cress)).